The primary structure comprises 365 residues: Probable flavin mononucleotide-dependent alkene reductase (365 aa).

FMN contacts are provided by residues 30–32 (PLT), A63, and Q105. Y191 functions as the Proton donor in the catalytic mechanism. FMN-binding positions include R238, S303, and 324-325 (GT).

It belongs to the NADH:flavin oxidoreductase/NADH oxidase family. As to quaternary structure, monomer. FMN serves as cofactor.

It localises to the cytoplasm. Its subcellular location is the cytosol. Functionally, may function as a flavin mononucleotide (FMN)-dependent alkene reductase on substrates carrying alpha,beta-unsaturated carbonyl groups (ketones, aldehydes, carboxylic acids, esters, lactones or cyclic imides). The catalysis depends on NAD(P)H, which acts as a hydride donor for the reduction. Seems to be involved in metabolic pathways required for efficient replication of amastigotes within macrophages. Acts as a FMN-dependent nitroreductase that activates anti-leishmanial bicyclic nitroaromatic prodrugs including delamanid, DNDI-VL-2098 and (R)-PA-824, forming toxic products that kill the parasites. This Leishmania infantum protein is Probable flavin mononucleotide-dependent alkene reductase.